The primary structure comprises 127 residues: Aspartate 1-decarboxylase (127 aa).

The active-site Schiff-base intermediate with substrate; via pyruvic acid is the serine 25. Serine 25 carries the post-translational modification Pyruvic acid (Ser). A substrate-binding site is contributed by threonine 57. The Proton donor role is filled by tyrosine 58. Glycine 73–alanine 75 contacts substrate.

This sequence belongs to the PanD family. Heterooctamer of four alpha and four beta subunits. Pyruvate serves as cofactor. Post-translationally, is synthesized initially as an inactive proenzyme, which is activated by self-cleavage at a specific serine bond to produce a beta-subunit with a hydroxyl group at its C-terminus and an alpha-subunit with a pyruvoyl group at its N-terminus.

The protein localises to the cytoplasm. The catalysed reaction is L-aspartate + H(+) = beta-alanine + CO2. The protein operates within cofactor biosynthesis; (R)-pantothenate biosynthesis; beta-alanine from L-aspartate: step 1/1. In terms of biological role, catalyzes the pyruvoyl-dependent decarboxylation of aspartate to produce beta-alanine. This Desulfitobacterium hafniense (strain DSM 10664 / DCB-2) protein is Aspartate 1-decarboxylase.